Reading from the N-terminus, the 527-residue chain is Tetanolysin (527 aa).

The N-terminal stretch at 1-32 is a signal peptide; it reads MNKNVLKFVSRSLLIFSMTGLISNYNSSNVLA. The next 4 beta stranded transmembrane spans lie at 215–228, 235–244, 313–322, and 330–342; these read QSQL…NFKA, IDFDSIFKGE, SSHVKAAFKA, and SSNA…LNQS. A Conserved undecapeptide motif is present at residues 484–494; it reads ECTGLAWEWWR. The short motif at 516-517 is the Cholesterol binding element; the sequence is TL.

This sequence belongs to the cholesterol-dependent cytolysin family. In terms of assembly, homooligomeric pore complex containing 35-50 subunits; when inserted in the host membrane. In terms of processing, purified 48 and 53 kDa proteins with 4 different pIs (6.1, 5.6, 5.3 and 6.6) in decreasing order of activity.

It is found in the secreted. The protein localises to the host cell membrane. With respect to regulation, cytolysis of host cells is inhibited by cholesterol. A cholesterol-dependent toxin that causes cytolysis by forming pores in cholesterol-containing host membranes. After binding to target membranes, the protein undergoes a major conformation change, leading to its insertion in the host membrane and formation of an oligomeric pore complex. Cholesterol is required for binding to host membranes, membrane insertion and pore formation; cholesterol binding is mediated by a Thr-Leu pair in the C-terminus. This chain is Tetanolysin, found in Clostridium tetani (strain Massachusetts / E88).